The sequence spans 946 residues: Multiple C2 and transmembrane domain-containing protein 1 (946 aa).

2 disordered regions span residues 28 to 193 (QLGV…QKSS) and 205 to 229 (LEPA…KGEE). The segment covering 31-43 (VGKGKGGGGGRAG) has biased composition (gly residues). The segment covering 87 to 96 (FSSSQPNLCC) has biased composition (polar residues). The segment covering 143–163 (PGGRSPDSAPSSSASSSLSSS) has biased composition (low complexity). Basic and acidic residues predominate over residues 169–187 (RGDRIRDEGTRRGSPEAHL). C2 domains lie at 235–353 (KINP…DVTL), 399–516 (QTQS…KLEL), and 550–671 (HKER…AYVL). Positions 270, 276, 323, 325, 331, 433, 439, 486, 488, 494, 589, 595, 641, 643, and 649 each coordinate Ca(2+). Helical transmembrane passes span 758 to 778 (FVLF…LLLL) and 861 to 881 (PFLS…LYFI).

Belongs to the MCTP family. The cofactor is Ca(2+). In terms of tissue distribution, expressed in the brain and central nervous system (at protein level). Isoform 1 and isoform 2 are expressed in the brain, kidney, liver, heart, lung, skeletal muscle, testis and spleen. Isoform 2 shows a higher expression in the brain, heart and skeletal muscle.

It localises to the cytoplasmic vesicle. It is found in the secretory vesicle. Its subcellular location is the synaptic vesicle membrane. The protein localises to the recycling endosome. The protein resides in the endoplasmic reticulum membrane. In terms of biological role, calcium sensor which is essential for the stabilization of normal baseline neurotransmitter release and for the induction and long-term maintenance of presynaptic homeostatic plasticity. Overexpression in cultured neurons significantly inhibits neuronal transferrin endocytosis, secretory vesicle retrieval, cell migration, and oxidative stress from glutamate toxicity. The polypeptide is Multiple C2 and transmembrane domain-containing protein 1 (Rattus norvegicus (Rat)).